The sequence spans 184 residues: Shikimate kinase (184 aa).

An ATP-binding site is contributed by 20–25; the sequence is GVGKSR. Ser24 contacts Mg(2+). Residues Asp42, Arg66, and Gly88 each contribute to the substrate site. Arg127 contacts ATP. Arg146 contributes to the substrate binding site. Arg162 is a binding site for ATP.

The protein belongs to the shikimate kinase family. In terms of assembly, monomer. Mg(2+) is required as a cofactor.

The protein localises to the cytoplasm. It carries out the reaction shikimate + ATP = 3-phosphoshikimate + ADP + H(+). It participates in metabolic intermediate biosynthesis; chorismate biosynthesis; chorismate from D-erythrose 4-phosphate and phosphoenolpyruvate: step 5/7. Functionally, catalyzes the specific phosphorylation of the 3-hydroxyl group of shikimic acid using ATP as a cosubstrate. The polypeptide is Shikimate kinase (Thermus thermophilus (strain ATCC 27634 / DSM 579 / HB8)).